Reading from the N-terminus, the 442-residue chain is Septin-8 (442 aa).

The span at 1 to 16 (MAATDLERISNAEPEP) shows a compositional bias: basic and acidic residues. The segment at 1-21 (MAATDLERISNAEPEPRSLSL) is disordered. The residue at position 2 (A2) is an N-acetylalanine. Phosphoserine is present on S10. In terms of domain architecture, Septin-type G spans 41–307 (QGFSFNILCV…ELYRRCKLEE (267 aa)). A G1 motif region spans residues 51–58 (GETGIGKS). GTP contacts are provided by residues 51 to 58 (GETGIGKS), G106, 187 to 195 (KADTISKSE), G241, and R256. Residues 103-106 (DAVG) are G3 motif. The interval 186-189 (AKAD) is G4 motif. Residues 322 to 407 (LQETYEAKRK…FNCRKAAMEA (86 aa)) are a coiled coil. Polar residues predominate over residues 411–420 (QALHATSQQP). Positions 411–442 (QALHATSQQPLRKDKDKKKVGGWSSIYSVTIP) are disordered.

Belongs to the TRAFAC class TrmE-Era-EngA-EngB-Septin-like GTPase superfamily. Septin GTPase family. In terms of assembly, septins polymerize into heterooligomeric protein complexes that form filaments, and can associate with cellular membranes, actin filaments and microtubules. GTPase activity is required for filament formation. Interacts with SEPTIN7. Interacts with CDK14, SEPTIN4 and SEPTIN5. Interacts with VAMP2; the interaction inhibits interaction of VAMP2 with SYP. Interacts with STX1A. As to expression, expressed in cerebrum, hippocampus and cerebellum (at protein level). Expressed in heart (at protein level).

The protein resides in the cytoplasm. It localises to the cytoskeleton. The protein localises to the synapse. Its subcellular location is the cell projection. It is found in the axon. The protein resides in the cytoplasmic vesicle. It localises to the secretory vesicle. The protein localises to the synaptic vesicle membrane. Its subcellular location is the presynapse. Filament-forming cytoskeletal GTPase. May play a role in platelet secretion. Seems to participate in the process of SNARE complex formation in synaptic vesicles. This chain is Septin-8, found in Rattus norvegicus (Rat).